The primary structure comprises 81 residues: Thrombin-like enzyme collinein-3 (81 aa).

The active site involves Asp4. An intrachain disulfide couples Cys51 to Cys68.

Monomer. As to expression, expressed by the vanom gland.

The protein localises to the secreted. In terms of biological role, thrombin-like snake venom serine protease. The protein is Thrombin-like enzyme collinein-3 of Crotalus durissus collilineatus (Brazilian rattlesnake).